A 219-amino-acid chain; its full sequence is Rho-related protein racN (219 aa).

12–19 provides a ligand contact to GTP; sequence GDVTIGKT. An Effector region motif is present at residues 33-41; the sequence is YIPTIFDNH. Residues 58–62 and 114–117 each bind GTP; these read DTGGG and TKTD. C216 carries the post-translational modification Cysteine methyl ester. C216 is lipidated: S-geranylgeranyl cysteine. A propeptide spans 217 to 219 (removed in mature form); the sequence is IIC.

Belongs to the small GTPase superfamily. Rho family.

The protein localises to the cell membrane. This chain is Rho-related protein racN (racN), found in Dictyostelium discoideum (Social amoeba).